Reading from the N-terminus, the 357-residue chain is DnaJ homolog subfamily C member 25 (357 aa).

The chain crosses the membrane as a helical span at residues 19–39; it reads WLLLAPLLLVPLLARPAEALV. A J domain is found at 48–121; that stretch reads DCYEVLGVSR…ETRKDYDYML (74 aa). Transmembrane regions (helical) follow at residues 147–167 and 241–261; these read VVILVSVCAISMFQYFSWWNS and LLLFQVILAPVHLCSYIAWYC.

It belongs to the DNAJC25 family.

It is found in the membrane. This Mus musculus (Mouse) protein is DnaJ homolog subfamily C member 25 (Dnajc25).